A 440-amino-acid chain; its full sequence is Beta-1,3-galactosyl-O-glycosyl-glycoprotein beta-1,6-N-acetylglucosaminyltransferase 3 (440 aa).

Residues 1–12 (MKMTGWKKKLCR) are Cytoplasmic-facing. A helical; Signal-anchor for type II membrane protein transmembrane segment spans residues 13-30 (GHHLWALGCYSLLAVVAL). Residues 31–440 (RLSLRLKCDV…RHKAIYGTEL (410 aa)) are Lumenal-facing. Cystine bridges form between Cys-73–Cys-230, Cys-164–Cys-384, Cys-185–Cys-212, and Cys-393–Cys-425. N-linked (GlcNAc...) asparagine glycosylation occurs at Asn-108.

This sequence belongs to the glycosyltransferase 14 family. Post-translationally, N-glycosylated.

The protein resides in the golgi apparatus membrane. It catalyses the reaction a 3-O-[beta-D-galactosyl-(1-&gt;3)-N-acetyl-alpha-D-galactosaminyl]-L-seryl-[protein] + UDP-N-acetyl-alpha-D-glucosamine = 3-O-{beta-D-galactosyl-(1-&gt;3)-[N-acetyl-beta-D-glucosaminyl-(1-&gt;6)]-N-acetyl-alpha-D-galactosaminyl}-L-seryl-[protein] + UDP + H(+). It carries out the reaction a 3-O-[beta-D-galactosyl-(1-&gt;3)-N-acetyl-alpha-D-galactosaminyl]-L-threonyl-[protein] + UDP-N-acetyl-alpha-D-glucosamine = a 3-O-{beta-D-galactosyl-(1-&gt;3)-[N-acetyl-beta-D-glucosaminyl-(1-&gt;6)]-N-acetyl-alpha-D-galactosaminyl}-L-threonyl-[protein] + UDP + H(+). The enzyme catalyses a beta-D-Gal-(1-&gt;4)-beta-D-GlcNAc-(1-&gt;3)-beta-D-Gal-(1-&gt;4)-beta-D-GlcNAc derivative + UDP-N-acetyl-alpha-D-glucosamine = a beta-D-Gal-(1-&gt;4)-beta-D-GlcNAc-(1-&gt;3)-[beta-D-GlcNAc-(1-&gt;6)]-beta-D-Gal-(1-&gt;4)-N-acetyl-beta-D-glucosaminyl derivative + UDP + H(+). The catalysed reaction is 3-O-[N-acetyl-beta-D-glucosaminyl-(1-&gt;3)-N-acetyl-alpha-D-galactosaminyl]-L-seryl-[protein] + UDP-N-acetyl-alpha-D-glucosamine = 3-O-[N-acetyl-beta-D-glucosaminyl-(1-&gt;3)-[N-acetyl-beta-D-glucosaminyl-(1-&gt;6)]-N-acetyl-alpha-D-galactosaminyl]-L-seryl-[protein] + UDP + H(+). It catalyses the reaction a 3-O-[N-acetyl-beta-D-glucosaminyl-(1-&gt;3)-N-acetyl-alpha-D-galactosaminyl]-L-threonyl-[protein] + UDP-N-acetyl-alpha-D-glucosamine = 3-O-[N-acetyl-beta-D-glucosaminyl-(1-&gt;3)-[N-acetyl-beta-D-glucosaminyl-(1-&gt;6)]-N-acetyl-alpha-D-galactosaminyl]-L-threonyl-[protein] + UDP + H(+). The protein operates within protein modification; protein glycosylation. Its function is as follows. Glycosyltransferase that can synthesize all known mucin beta 6 N-acetylglucosaminides. Mediates core 2 and core 4 O-glycan branching, 2 important steps in mucin-type biosynthesis. Also has I-branching enzyme activity by converting linear into branched poly-N-acetyllactosaminoglycans, leading to introduce the blood group I antigen during embryonic development. In Bos mutus grunniens (Wild yak), this protein is Beta-1,3-galactosyl-O-glycosyl-glycoprotein beta-1,6-N-acetylglucosaminyltransferase 3 (GCNT3).